We begin with the raw amino-acid sequence, 180 residues long: Endoribonuclease YbeY (180 aa).

Zn(2+) contacts are provided by His-136, His-140, and His-146.

Belongs to the endoribonuclease YbeY family. It depends on Zn(2+) as a cofactor.

It is found in the cytoplasm. In terms of biological role, single strand-specific metallo-endoribonuclease involved in late-stage 70S ribosome quality control and in maturation of the 3' terminus of the 16S rRNA. The protein is Endoribonuclease YbeY of Synechococcus sp. (strain CC9902).